The following is a 478-amino-acid chain: Stromelysin-1 (478 aa).

The N-terminal stretch at 1 to 17 is a signal peptide; sequence MQNLPALLLFCGVVCSA. A propeptide spans 18-99 (activation peptide); it reads YPVDRAAEDE…PRCGVPDVGD (82 aa). A Cysteine switch motif is present at residues 90–97; the sequence is PRCGVPDV. C92 provides a ligand contact to Zn(2+). Ca(2+) is bound by residues D124 and D158. Zn(2+)-binding residues include H168 and D170. Ca(2+)-binding residues include D175, G176, G178, and V180. H183 provides a ligand contact to Zn(2+). G190 and D194 together coordinate Ca(2+). H196 serves as a coordination point for Zn(2+). Ca(2+)-binding residues include D198, D199, and E201. H218 lines the Zn(2+) pocket. Residue E219 is part of the active site. Residues H222 and H228 each coordinate Zn(2+). The segment at 260–286 is disordered; that stretch reads QSLYGGPPSDSSNDPVVPTESVPPGPG. Residues 266-277 are compositionally biased toward low complexity; it reads PPSDSSNDPVVP. 4 Hemopexin repeats span residues 288–337, 338–384, 386–434, and 435–478; these read PAAC…WPSL, PSGL…GFPP, VKKI…FPGV, and DSKV…WLNC. C291 and C478 are joined by a disulfide. Residue D298 participates in Ca(2+) binding. The Ca(2+) site is built by D390 and D439. N452 carries N-linked (GlcNAc...) asparagine glycosylation.

The protein belongs to the peptidase M10A family. Requires Ca(2+) as cofactor. Zn(2+) is required as a cofactor.

It is found in the secreted. The protein localises to the extracellular space. It localises to the extracellular matrix. It catalyses the reaction Preferential cleavage where P1', P2' and P3' are hydrophobic residues.. Metalloproteinase with a rather broad substrate specificity that can degrade fibronectin, laminin, gelatins of type I, III, IV, and V; collagens III, IV, X, and IX, and cartilage proteoglycans. Activates different molecules including growth factors, plasminogen or other matrix metalloproteinases such as MMP9. Once released into the extracellular matrix (ECM), the inactive pro-enzyme is activated by the plasmin cascade signaling pathway. Also acts intracellularly. For example, in dopaminergic neurons, gets activated by the serine protease HTRA2 upon stress and plays a pivotal role in DA neuronal degeneration by mediating microglial activation and alpha-synuclein/SNCA cleavage. In addition, plays a role in immune response and possesses antiviral activity against various viruses. Mechanistically, translocates from the cytoplasm into the cell nucleus upon virus infection to influence NF-kappa-B activities. In Canis lupus familiaris (Dog), this protein is Stromelysin-1 (MMP3).